A 336-amino-acid polypeptide reads, in one-letter code: Iron(3+)-hydroxamate import system permease protein FhuG (336 aa).

9 helical membrane-spanning segments follow: residues 9-29 (LIVM…SLNL), 63-83 (IILS…LQSV), 91-111 (PGIL…IYFF), 124-144 (FMLP…IYIL), 155-175 (LILV…IFQL), 193-213 (IWGA…ILLL), 245-265 (ILLL…GGIA), 285-305 (TLIP…DTLA), and 313-333 (EIPV…YLLM).

This sequence belongs to the binding-protein-dependent transport system permease family. FecCD subfamily. The complex is composed of an ATP-binding protein (FhuC), two transmembrane proteins (FhuB and FhuG) and a solute-binding protein (FhuD or YxeB).

Its subcellular location is the cell membrane. Part of the ABC transporter complex FhuBGCD involved in iron(3+)-hydroxamate import. Responsible for the translocation of the substrate across the membrane. The protein is Iron(3+)-hydroxamate import system permease protein FhuG (fhuG) of Bacillus subtilis (strain 168).